The following is an 88-amino-acid chain: UPF0297 protein LAR_0520 (88 aa).

This sequence belongs to the UPF0297 family.

This chain is UPF0297 protein LAR_0520, found in Limosilactobacillus reuteri subsp. reuteri (strain JCM 1112) (Lactobacillus reuteri).